The primary structure comprises 427 residues: Glutamate-1-semialdehyde 2,1-aminomutase (427 aa).

Position 265 is an N6-(pyridoxal phosphate)lysine (Lys265).

It belongs to the class-III pyridoxal-phosphate-dependent aminotransferase family. HemL subfamily. In terms of assembly, homodimer. Requires pyridoxal 5'-phosphate as cofactor.

The protein resides in the cytoplasm. It carries out the reaction (S)-4-amino-5-oxopentanoate = 5-aminolevulinate. It functions in the pathway porphyrin-containing compound metabolism; protoporphyrin-IX biosynthesis; 5-aminolevulinate from L-glutamyl-tRNA(Glu): step 2/2. The chain is Glutamate-1-semialdehyde 2,1-aminomutase from Neisseria meningitidis serogroup A / serotype 4A (strain DSM 15465 / Z2491).